The following is a 245-amino-acid chain: Probable phosphatase PMI1003 (245 aa).

Zn(2+) contacts are provided by H7, H9, H15, H40, E73, H101, H131, D192, and H194.

Belongs to the PHP family. In terms of assembly, homotrimer. Zn(2+) is required as a cofactor.

The sequence is that of Probable phosphatase PMI1003 from Proteus mirabilis (strain HI4320).